Here is a 127-residue protein sequence, read N- to C-terminus: PRA1 family protein C (127 aa).

Helical transmembrane passes span 15-35, 53-73, and 76-96; these read IFIS…LIVA, VIDD…IFLL, and VSRG…VHGM.

The protein belongs to the PRA1 family.

The protein localises to the endoplasmic reticulum membrane. May be involved in both secretory and endocytic intracellular trafficking in the endosomal/prevacuolar compartments. The chain is PRA1 family protein C (PRA1C) from Arabidopsis thaliana (Mouse-ear cress).